A 437-amino-acid chain; its full sequence is Glutamate-1-semialdehyde 2,1-aminomutase (437 aa).

Position 274 is an N6-(pyridoxal phosphate)lysine (Lys-274).

Belongs to the class-III pyridoxal-phosphate-dependent aminotransferase family. HemL subfamily. Homodimer. It depends on pyridoxal 5'-phosphate as a cofactor.

The protein localises to the cytoplasm. It carries out the reaction (S)-4-amino-5-oxopentanoate = 5-aminolevulinate. It functions in the pathway porphyrin-containing compound metabolism; protoporphyrin-IX biosynthesis; 5-aminolevulinate from L-glutamyl-tRNA(Glu): step 2/2. The protein is Glutamate-1-semialdehyde 2,1-aminomutase of Verminephrobacter eiseniae (strain EF01-2).